The chain runs to 65 residues: Small ribosomal subunit protein bS21 (65 aa).

It belongs to the bacterial ribosomal protein bS21 family.

The protein is Small ribosomal subunit protein bS21 of Trichlorobacter lovleyi (strain ATCC BAA-1151 / DSM 17278 / SZ) (Geobacter lovleyi).